The chain runs to 5142 residues: Protein piccolo (5142 aa).

Over residues 1-21 the composition is skewed to low complexity; sequence MGNEASLEGEGLPEGLAAAAA. Disordered stretches follow at residues 1 to 154 and 177 to 583; these read MGNE…SMMP and DLIS…PSQG. Composition is skewed to basic and acidic residues over residues 114–125, 136–150, and 188–202; these read RTTDTFRSEQKL, KESK…EHKS, and ETTK…EQGK. Over residues 232 to 244 the composition is skewed to polar residues; sequence QDGTPKSISSQQP. Composition is skewed to pro residues over residues 298–317 and 352–371; these read LPSP…PPAQ and PVQP…PAKP. Positions 376–385 are enriched in polar residues; it reads TGSEKPSSEQ. The tract at residues 397 to 555 is 10 X 10 AA tandem approximate repeats of P-A-K-P-Q-P-Q-Q-P-X; that stretch reads VGKTPAQQPG…PAKPSAQQST (159 aa). Residues 467–493 show a composition bias toward pro residues; the sequence is TKPPSQLPGPAKPPPQQPGPAKPPPQQ. Residues 494–506 are compositionally biased toward low complexity; the sequence is PGSAKPPSQQPGS. Residues 507-522 are compositionally biased toward pro residues; it reads TKPPPQQPGPAKPSPQ. Low complexity predominate over residues 523–554; it reads QPGSTKPPSQQPGSAKPSAQQPSPAKPSAQQS. A C4-type zinc finger spans residues 589–613; sequence CPLCNTTELLLHVPEKANFNTCTEC. Disordered stretches follow at residues 650-929 and 945-1058; these read LAPV…TVTG and LIST…PEST. Low complexity predominate over residues 673 to 683; the sequence is SKSSPQPQQTS. 2 stretches are compositionally biased toward basic and acidic residues: residues 684–702 and 743–755; these read PKKD…EPKK and EQDK…DKPK. Residues 765-774 show a composition bias toward polar residues; the sequence is DLVSSSSATT. The span at 841-857 shows a compositional bias: basic and acidic residues; the sequence is KGQKQVDPVQKKEEPKK. Residues 873–882 show a composition bias toward pro residues; it reads KGSPTPPGPR. The span at 889 to 927 shows a compositional bias: polar residues; it reads VPTPQQSPKPQEQSRRFSLNLGSITDAPKSQPTTPQETV. 2 positions are modified to phosphoserine: serine 906 and serine 918. Position 922 is a phosphothreonine (threonine 922). The segment covering 949–969 has biased composition (low complexity); that stretch reads AGQPGPHSQSGPGAPMKQAPA. 2 stretches are compositionally biased toward basic and acidic residues: residues 996 to 1012 and 1019 to 1034; these read VKKE…EPKA and KRTE…KDSK. The C4-type zinc finger occupies 1059 to 1082; sequence CPLCKTELNIGSKDPPNFNTCTEC. 4 disordered regions span residues 1120 to 1163, 1183 to 1386, 1391 to 1410, and 1423 to 1868; these read GDIR…QEQE, EKIP…TDEK, GLKK…SDLA, and QAST…SDPE. Pro residues predominate over residues 1126-1139; the sequence is PPAPSGPKASPMPV. Basic and acidic residues-rich tracts occupy residues 1193–1265, 1307–1318, and 1330–1347; these read QKQE…HDLL, PKEDDKTTKTIK, and DQVE…DKSD. Residues 1348-1358 are compositionally biased toward low complexity; the sequence is TSSSQQPKSPQ. Phosphoserine is present on residues serine 1356, serine 1366, serine 1367, serine 1396, serine 1398, serine 1401, serine 1402, and serine 1405. Residues 1359–1374 are compositionally biased toward polar residues; it reads GLSDTGYSSDGISSSL. Positions 1398-1407 are enriched in low complexity; it reads SQESSPSSPS. Composition is skewed to basic and acidic residues over residues 1428-1451 and 1469-1510; these read ADEK…DQEK and KESQ…REPY. A phosphoserine mark is found at serine 1516, serine 1517, serine 1519, serine 1522, serine 1546, serine 1549, serine 1570, and serine 1572. The span at 1564–1576 shows a compositional bias: acidic residues; sequence SADEDASGSEDDE. Position 1617 is a phosphothreonine (threonine 1617). Residues serine 1618, serine 1628, and serine 1640 each carry the phosphoserine modification. The segment covering 1631–1640 has biased composition (acidic residues); sequence DEDDEAFDES. The segment covering 1641–1652 has biased composition (basic and acidic residues); sequence PELKYRETKSQE. The span at 1671–1689 shows a compositional bias: polar residues; that stretch reads ELNSTIADKYSAESSQKKT. Over residues 1693–1703 the composition is skewed to acidic residues; it reads FDEEPELEMES. Residue serine 1703 is modified to Phosphoserine. Threonine 1705 carries the phosphothreonine modification. 2 positions are modified to phosphoserine: serine 1707 and serine 1712. Polar residues predominate over residues 1715 to 1732; it reads EGSSSLHASSFTPGTSPT. The segment covering 1772-1785 has biased composition (acidic residues); it reads DSSEEEELREEEEL. Residues serine 1773 and serine 1774 each carry the phosphoserine modification. The segment covering 1786–1799 has biased composition (basic and acidic residues); sequence LKEQEKQREIEQQQ. Residue threonine 1825 is modified to Phosphothreonine. At serine 1831 the chain carries Phosphoserine. Positions 1840 to 1855 are enriched in basic and acidic residues; that stretch reads EELRQAAEMEELHRSS. Phosphoserine occurs at positions 1860, 1865, 1873, and 1894. Disordered regions lie at residues 2169–2192, 2365–2438, and 2504–2536; these read PSES…SSVC, ETFG…PTIL, and EPSK…PTGL. Low complexity-rich tracts occupy residues 2174 to 2192 and 2374 to 2387; these read TSVP…SSVC and SQLP…SSLP. 2 stretches are compositionally biased toward pro residues: residues 2404 to 2433 and 2506 to 2517; these read QPPP…PTSP and SKPPIAPKPVIP. At serine 2562 the chain carries Phosphoserine. A Phosphothreonine modification is found at threonine 3069. Disordered stretches follow at residues 3407–3508 and 3558–3626; these read EKQP…DKTK and KTYK…LYSP. Over residues 3432-3441 the composition is skewed to basic and acidic residues; that stretch reads DDPRSFKKIV. A Phosphoserine modification is found at serine 3443. Phosphothreonine is present on residues threonine 3447 and threonine 3474. The span at 3474–3483 shows a compositional bias: acidic residues; sequence TDDEDQDEWD. Residues 3574-3585 are compositionally biased toward polar residues; sequence DTQSPQYLSATS. 11 positions are modified to phosphoserine: serine 3577, serine 3585, serine 3615, serine 3619, serine 3625, serine 3628, serine 3631, serine 3652, serine 3678, serine 3680, and serine 3686. Disordered stretches follow at residues 3652-3746 and 3833-3908; these read SPQK…MGTV and YMSD…QQSH. Polar residues-rich tracts occupy residues 3701–3716 and 3733–3745; these read EGYT…SSGA and STGT…TMGT. Serine 3835 is subject to Phosphoserine. A compositionally biased stretch (basic and acidic residues) spans 3845–3857; the sequence is TRIESQHGIERPR. The segment covering 3859–3908 has biased composition (polar residues); it reads APQTEFSQFIPPQTQTESQLVPPTSPYTQYQYSSPALPTQAPTSYTQQSH. 2 positions are modified to phosphoserine: serine 4088 and serine 4204. The tract at residues 4278-4301 is disordered; the sequence is EADKPYSSGSRSRPSSRPSSVYGL. The span at 4282 to 4301 shows a compositional bias: low complexity; the sequence is PYSSGSRSRPSSRPSSVYGL. Phosphoserine is present on residues serine 4358, serine 4362, serine 4365, serine 4394, and serine 4430. The disordered stretch occupies residues 4389–4411; that stretch reads RDQFGSSHSLPEVQQHMREESRT. The region spanning 4496 to 4590 is the PDZ domain; it reads RIKITRDSKD…EAEICVRLDL (95 aa). Disordered regions lie at residues 4597-4618 and 4645-4690; these read ENSQ…KSPG and EKGS…TKVV. The segment covering 4598–4615 has biased composition (basic and acidic residues); it reads NSQHLELHEPPKAVDKAK. Over residues 4652 to 4673 the composition is skewed to low complexity; it reads SGPTSAGSSSVPSPGQPGSPSV. Serine 4664 carries the phosphoserine modification. Residues 4694–4823 form the C2 1 domain; the sequence is ITGEIQLQIN…SHLDNTPRWY (130 aa). 2 residues coordinate Ca(2+): aspartate 4723 and aspartate 4729. Serine 4778 carries the phosphoserine modification. Ca(2+)-binding residues include aspartate 4793, aspartate 4795, serine 4798, and aspartate 4801. Disordered regions lie at residues 4830–4907 and 4930–4986; these read ESID…VTQT and PTKP…QNGQ. Composition is skewed to low complexity over residues 4838-4853 and 4877-4887; these read HSSQ…SVIK and SSPGSSKSSSE. Residues 4895–4907 are compositionally biased toward polar residues; that stretch reads PSRSQSKTSVTQT. The span at 4941 to 4965 shows a compositional bias: low complexity; that stretch reads SSVSTGSSGSSFGSGYSVDSEGSSS. One can recognise a C2 2 domain in the interval 5007-5132; sequence VMGEIKIALK…DLRKRIVNWH (126 aa).

In terms of assembly, interacts with BSN, ERC2/CAST1, RIMS1 and UNC13A. Interacts (via C-terminus) with TRIO (via N-terminus). Interacts with CTBP1. Interacts with SIAH1; this interaction negatively regulates SIAH1 E3 ligase activity. Directly interacts with GIT1 and GIT2. The cofactor is Ca(2+). As to expression, moderately expressed in the developing cerebral cortex.

The protein resides in the presynaptic active zone. Its function is as follows. Scaffold protein of the presynaptic cytomatrix at the active zone (CAZ) which is the place in the synapse where neurotransmitter is released. After synthesis, participates in the formation of Golgi-derived membranous organelles termed Piccolo-Bassoon transport vesicles (PTVs) that are transported along axons to sites of nascent synaptic contacts. At the presynaptic active zone, regulates the spatial organization of synaptic vesicle cluster, the protein complexes that execute membrane fusion and compensatory endocytosis. Organizes as well the readily releasable pool of synaptic vesicles and safeguards a fraction of them to be not immediately available for action potential-induced release. Also functions in processes other than assembly such as the regulation of specific presynaptic protein ubiquitination by interacting with SIAH1 or the regulation of presynaptic autophagy. Also mediates synapse to nucleus communication leading to reconfiguration of gene expression by associating with the transcriptional corepressor CTBP1 and by subsequently reducing the size of its pool available for nuclear import. This Homo sapiens (Human) protein is Protein piccolo.